The primary structure comprises 142 residues: Large ribosomal subunit protein uL13 (142 aa).

This sequence belongs to the universal ribosomal protein uL13 family. As to quaternary structure, part of the 50S ribosomal subunit.

In terms of biological role, this protein is one of the early assembly proteins of the 50S ribosomal subunit, although it is not seen to bind rRNA by itself. It is important during the early stages of 50S assembly. The protein is Large ribosomal subunit protein uL13 of Polaromonas sp. (strain JS666 / ATCC BAA-500).